The primary structure comprises 361 residues: Oxidoreductase lepF (361 aa).

Residues M257–L277 form a helical membrane-spanning segment.

It belongs to the NmrA-type oxidoreductase family.

The protein resides in the membrane. In terms of biological role, oxidoreductase; part of the gene cluster 23 that mediates the biosynthesis of a family of 2-pyridones known as leporins. The hybrid PKS-NRPS synthetase lepA and the enoyl reductase lepG are responsible for fusion of phenylalanine with a hexaketide and subsequent release of the stable tetramic acid precursor, pre-leporin C. Because lepA lacks a designated enoylreductase (ER) domain, the required activity is provided the enoyl reductase lepG. It is possible that the dehydrogenase lepF also participates in production of pre-leporin C. Cytochrome P450 monooxygenase lepH is then required for the ring expansion step to yield leporin C. Leporin C is then presumably further oxidized by the N-hydroxylase lepD to form leporin B. LepI may possess a function in biosynthesis upstream of lepA. Leporin B is further oxidized in the presence of ferric ion to give the leporin B trimer-iron chelate, but whether or not this reaction is catalyzed by an enzyme in the pathway or by ferric ion is not determined yet. The sequence is that of Oxidoreductase lepF from Aspergillus flavus (strain ATCC 200026 / FGSC A1120 / IAM 13836 / NRRL 3357 / JCM 12722 / SRRC 167).